We begin with the raw amino-acid sequence, 265 residues long: MSLALLCSLLLVHGSLGEIVFRCPSCTAERQAACPKLTTSCEIVREPGCGCCPVCARQKGELCGVYTTRCGSGLRCYPSANSELPLEQLIQGLGRCENKVDLEPTMTNQESAAHSGEVNGTRSPPMKKPGKDYQYIKEIAVNKHHNNKRTRMYNTQDDPKTPHPKQSQCQQELDKVLENISRMAFHDNKGPLENLYDLKFPNCDKTGQYNLKQCHMSTHGQRGECWCVNPYTGVQIPSSDKVRGDPNCSQYYGGPELEPPTAQQK.

The N-terminal stretch at 1-17 (MSLALLCSLLLVHGSLG) is a signal peptide. An IGFBP N-terminal domain is found at 19-99 (IVFRCPSCTA…IQGLGRCENK (81 aa)). Cystine bridges form between Cys-23/Cys-49, Cys-26/Cys-51, Cys-34/Cys-52, Cys-41/Cys-55, Cys-63/Cys-76, and Cys-70/Cys-96. A compositionally biased stretch (polar residues) spans 107–122 (TNQESAAHSGEVNGTR). Disordered stretches follow at residues 107 to 128 (TNQE…PMKK) and 144 to 170 (HHNN…SQCQ). The Thyroglobulin type-1 domain maps to 166–248 (QSQCQQELDK…SDKVRGDPNC (83 aa)). 3 disulfide bridges follow: Cys-169–Cys-203, Cys-214–Cys-225, and Cys-227–Cys-248. The segment at 238–265 (SSDKVRGDPNCSQYYGGPELEPPTAQQK) is disordered. The Cell attachment site motif lies at 243–245 (RGD).

Interacts with igf2. Interacts with igf1. In terms of tissue distribution, in early embryos, expressed at a low level in most tissues with expression becoming abundant in the liver by 96 hours post-fertilization (hpf). The expression pattern in adults exhibits sexual dimorphism; in adult males expression is limited exclusively to the liver whereas in adult females expression is observed in the liver and other tissues including the gut, kidney, ovary and muscle.

It localises to the secreted. Functionally, IGF-binding proteins prolong the half-life of the IGFs and have been shown to either inhibit or stimulate the growth promoting effects of the IGFs on cell culture. They alter the interaction of IGFs with their cell surface receptors. This is Insulin-like growth factor-binding protein 2-B from Danio rerio (Zebrafish).